Here is a 243-residue protein sequence, read N- to C-terminus: Exosome complex component Rrp41 (243 aa).

It belongs to the RNase PH family. Rrp41 subfamily. Component of the archaeal exosome complex. Forms a hexameric ring-like arrangement composed of 3 Rrp41-Rrp42 heterodimers. The hexameric ring associates with a trimer of Rrp4 and/or Csl4 subunits.

Its subcellular location is the cytoplasm. In terms of biological role, catalytic component of the exosome, which is a complex involved in RNA degradation. Has 3'-&gt;5' exoribonuclease activity. Can also synthesize heteromeric RNA-tails. The polypeptide is Exosome complex component Rrp41 (Sulfolobus acidocaldarius (strain ATCC 33909 / DSM 639 / JCM 8929 / NBRC 15157 / NCIMB 11770)).